The sequence spans 890 residues: Tyrosine-protein kinase receptor TYRO3 (890 aa).

The N-terminal stretch at 1–40 (MALRRSMGRPGLPPLPLPPPPRLGLLLAALASLLLPESAA) is a signal peptide. 2 Ig-like C2-type domains span residues 41–128 (AGLK…TEIS) and 139–220 (PFFT…ATVH). Residues 41 to 429 (AGLKLMGAPV…QGPPHSRTSW (389 aa)) lie on the Extracellular side of the membrane. Residue Asn63 is glycosylated (N-linked (GlcNAc...) asparagine). 2 disulfide bridges follow: Cys64-Cys117 and Cys160-Cys203. Residues Asn191, Asn230, Asn240, Asn293, Asn366, and Asn380 are each glycosylated (N-linked (GlcNAc...) asparagine). 2 Fibronectin type-III domains span residues 227-320 (APFN…TKGL) and 325-416 (APQN…SHDR). The chain crosses the membrane as a helical span at residues 430–450 (VPVVLGVLTALVTAAALALIL). The Cytoplasmic portion of the chain corresponds to 451–890 (LRKRRKETRF…QQGLLPHSSC (440 aa)). At Ser466 the chain carries Phosphoserine. Residues 518–790 (FTLGRMLGKG…CLRMELENIL (273 aa)) enclose the Protein kinase domain. Residues 524–532 (LGKGEFGSV) and Lys550 each bind ATP. The active-site Proton acceptor is the Asp655. Residues Tyr681, Tyr685, Tyr686, and Tyr804 each carry the phosphotyrosine; by autocatalysis modification. Disordered regions lie at residues 815–837 (AGGSLELPGRDQPYSGAGDGSGM) and 851–871 (LTPGGLAEQPGQAEHQPESPL). Residues Ser818 and Ser869 each carry the phosphoserine modification.

It belongs to the protein kinase superfamily. Tyr protein kinase family. AXL/UFO subfamily. Monomer and homodimer. Interacts (via N-terminus) with extracellular ligands TULP1 and GAS6. Interacts with PIK3R1; this interaction increases PI3-kinase activity. Post-translationally, autophosphorylated. As to expression, abundant in the brain and lower levels in other tissues.

It localises to the cell membrane. It catalyses the reaction L-tyrosyl-[protein] + ATP = O-phospho-L-tyrosyl-[protein] + ADP + H(+). Receptor tyrosine kinase that transduces signals from the extracellular matrix into the cytoplasm by binding to several ligands including TULP1 or GAS6. Regulates many physiological processes including cell survival, migration and differentiation. Ligand binding at the cell surface induces dimerization and autophosphorylation of TYRO3 on its intracellular domain that provides docking sites for downstream signaling molecules. Following activation by ligand, interacts with PIK3R1 and thereby enhances PI3-kinase activity. Activates the AKT survival pathway, including nuclear translocation of NF-kappa-B and up-regulation of transcription of NF-kappa-B-regulated genes. TYRO3 signaling plays a role in various processes such as neuron protection from excitotoxic injury, platelet aggregation and cytoskeleton reorganization. Also plays an important role in inhibition of Toll-like receptors (TLRs)-mediated innate immune response by activating STAT1, which selectively induces production of suppressors of cytokine signaling SOCS1 and SOCS3. In terms of biological role, (Microbial infection) Acts as a receptor for lassa virus and lymphocytic choriomeningitis virus, possibly through GAS6 binding to phosphatidyl-serine at the surface of virion envelope. Its function is as follows. (Microbial infection) Acts as a receptor for Ebolavirus, possibly through GAS6 binding to phosphatidyl-serine at the surface of virion envelope. The protein is Tyrosine-protein kinase receptor TYRO3 (TYRO3) of Homo sapiens (Human).